The sequence spans 606 residues: 4-hydroxy-3-methylbut-2-en-1-yl diphosphate synthase (flavodoxin) (606 aa).

4 residues coordinate [4Fe-4S] cluster: Cys-513, Cys-516, Cys-547, and Glu-554.

It belongs to the IspG family. [4Fe-4S] cluster serves as cofactor.

It carries out the reaction (2E)-4-hydroxy-3-methylbut-2-enyl diphosphate + oxidized [flavodoxin] + H2O + 2 H(+) = 2-C-methyl-D-erythritol 2,4-cyclic diphosphate + reduced [flavodoxin]. It participates in isoprenoid biosynthesis; isopentenyl diphosphate biosynthesis via DXP pathway; isopentenyl diphosphate from 1-deoxy-D-xylulose 5-phosphate: step 5/6. Functionally, converts 2C-methyl-D-erythritol 2,4-cyclodiphosphate (ME-2,4cPP) into 1-hydroxy-2-methyl-2-(E)-butenyl 4-diphosphate. This is 4-hydroxy-3-methylbut-2-en-1-yl diphosphate synthase (flavodoxin) from Chlamydia felis (strain Fe/C-56) (Chlamydophila felis).